Reading from the N-terminus, the 246-residue chain is MTSEAAPASTAVTYKRVMLKISGEALMGDQGYGLHPPTVQRIAREVQAVHRLGVEICMVIGGGNIFRGLQGSAQGMERTTADYMGMLATVMNALAMQAALESLGIFTRVISAIPMDQVCEPYIRRRAVRHLEKKRVCIFAAGTGNPYFTTDTAATLRANEMACQAIFKGTKVDGVYDKDPRKFADAKRYETVSYDECLQKHLGVMDASAIALARDNDLPIIVFSLDEPGGFCGILRGEGTYTRVQG.

20-23 (KISG) contacts ATP. Residues 28 to 33 (GDQGYG) are involved in allosteric activation by GTP. Gly62 lines the UMP pocket. ATP-binding residues include Gly63 and Arg67. UMP contacts are provided by residues Asp82 and 143–150 (TGNPYFTT). Residues Thr170, Tyr176, and Asp179 each coordinate ATP.

This sequence belongs to the UMP kinase family. In terms of assembly, homohexamer.

It is found in the cytoplasm. The catalysed reaction is UMP + ATP = UDP + ADP. The protein operates within pyrimidine metabolism; CTP biosynthesis via de novo pathway; UDP from UMP (UMPK route): step 1/1. Allosterically activated by GTP. Inhibited by UTP. Functionally, catalyzes the reversible phosphorylation of UMP to UDP. The polypeptide is Uridylate kinase (Cereibacter sphaeroides (strain ATCC 17029 / ATH 2.4.9) (Rhodobacter sphaeroides)).